A 57-amino-acid chain; its full sequence is Large ribosomal subunit protein eL20 (57 aa).

This sequence belongs to the eukaryotic ribosomal protein eL20 family. In terms of assembly, part of the 50S ribosomal subunit. Binds 23S rRNA.

The chain is Large ribosomal subunit protein eL20 from Archaeoglobus fulgidus (strain ATCC 49558 / DSM 4304 / JCM 9628 / NBRC 100126 / VC-16).